Consider the following 137-residue polypeptide: MRHYEIVFMVHPDQSEQVAGMIERYTGSITEAGGTIHRLEDWGRRQMAYPINKLHKAHYVLMNVEAGQEVMDELETAFRFNDAVLRNMIMRTKGAVTEQSIMLKQKEERAERAPRRDDREERAPRREEEAKPEAAAE.

The interval 96-137 (VTEQSIMLKQKEERAERAPRRDDREERAPRREEEAKPEAAAE) is disordered. A compositionally biased stretch (basic and acidic residues) spans 104 to 137 (KQKEERAERAPRRDDREERAPRREEEAKPEAAAE).

The protein belongs to the bacterial ribosomal protein bS6 family.

Functionally, binds together with bS18 to 16S ribosomal RNA. The sequence is that of Small ribosomal subunit protein bS6 from Vibrio atlanticus (strain LGP32) (Vibrio splendidus (strain Mel32)).